The chain runs to 390 residues: Formate-dependent phosphoribosylglycinamide formyltransferase (390 aa).

N(1)-(5-phospho-beta-D-ribosyl)glycinamide contacts are provided by residues 18–19 and E78; that span reads EL. ATP is bound by residues R110, K151, 156 to 161, 191 to 194, and E199; these read SSGKGQ and EEFL. The region spanning 115–305 is the ATP-grasp domain; the sequence is DLASKELNIK…EFELHLRAFL (191 aa). Residues E264 and E276 each contribute to the Mg(2+) site. Residues D283, K353, and 360-361 contribute to the N(1)-(5-phospho-beta-D-ribosyl)glycinamide site; that span reads RR.

The protein belongs to the PurK/PurT family. As to quaternary structure, homodimer.

The enzyme catalyses N(1)-(5-phospho-beta-D-ribosyl)glycinamide + formate + ATP = N(2)-formyl-N(1)-(5-phospho-beta-D-ribosyl)glycinamide + ADP + phosphate + H(+). The protein operates within purine metabolism; IMP biosynthesis via de novo pathway; N(2)-formyl-N(1)-(5-phospho-D-ribosyl)glycinamide from N(1)-(5-phospho-D-ribosyl)glycinamide (formate route): step 1/1. In terms of biological role, involved in the de novo purine biosynthesis. Catalyzes the transfer of formate to 5-phospho-ribosyl-glycinamide (GAR), producing 5-phospho-ribosyl-N-formylglycinamide (FGAR). Formate is provided by PurU via hydrolysis of 10-formyl-tetrahydrofolate. This is Formate-dependent phosphoribosylglycinamide formyltransferase from Prochlorococcus marinus (strain MIT 9515).